Here is a 935-residue protein sequence, read N- to C-terminus: Potassium channel AKT1 (935 aa).

Residues 1–106 (MARWGAARMA…YDRRYRIWET (106 aa)) are Cytoplasmic-facing. The chain crosses the membrane as a helical span at residues 107–127 (FLIVLVVYSAWVSPFEFGFIP). Residues 128–136 (KPTGALATA) are Extracellular-facing. The chain crosses the membrane as a helical span at residues 137 to 157 (DNVVNAFFAVDIILTFFVAYL). Topologically, residues 158-178 (DKMSYMLEDDPKKIAWRYSTT) are cytoplasmic. Residues 179–199 (WLVLDVASTIPSEFARRILPS) form a helical membrane-spanning segment. At 200–205 (KLRSYG) the chain is on the extracellular side. The helical; Voltage-sensor transmembrane segment at 206 to 226 (FFNMLRLWRLRRVSSLFSRLE) threads the bilayer. Residues 227–240 (KDRHFNYFWVRCAK) lie on the Cytoplasmic side of the membrane. A helical membrane pass occupies residues 241-261 (LICVTLFAVHCAACFYYLLAD). Over 262–288 (RYPVPTSTWIGNYMADFHERSLWIRYV) the chain is Extracellular. Positions 289-308 (TSVYWSITTLTTVGYGDLHA) form an intramembrane region, pore-forming. Over 309-312 (ENTR) the chain is Extracellular. A helical membrane pass occupies residues 313–333 (EMIFNIFYMLFNLGLTAYLIG). Topologically, residues 334–935 (NMTNLVVHGT…WDAEKMKGKS (602 aa)) are cytoplasmic. A nucleoside 3',5'-cyclic phosphate is bound at residue 419-538 (LFQGVSNDLI…TIIMNNLIQF (120 aa)). ANK repeat units follow at residues 565–594 (DLPITLCFAVTRGDDFLLHQLLKRGMDPNE), 598–627 (DGHTALHIAASKGNEQCVRLLLEYGADPNA), 631–660 (EGKVPLWEALCEKHAAVVQLLVEGGADLSS), 662–691 (DTGLYACIAVEESDTELLNDIIHYGGDVNR), 695–724 (DGTTALHRAVCDGNVQMAELLLEHGADIDK), and 728–757 (NGWTPRALAEQQGHDDIQLLFRSRKAATAS). The disordered stretch occupies residues 826-854 (SQAQRETDHPLSRGGLAATGSPNPSSGSR). Positions 845–854 (GSPNPSSGSR) are enriched in polar residues. Positions 859–935 (RVTISCPEKG…WDAEKMKGKS (77 aa)) constitute a KHA domain.

The protein belongs to the potassium channel family. Plant (TC 1.A.1.4) subfamily. The potassium channel is probably a homo- or heterotetrameric complex of pore-forming subunits. In terms of tissue distribution, expressed in roots and coleoptile of young seedlings.

The protein resides in the membrane. In terms of biological role, highly selective inward-rectifying potassium channel that mediates potassium uptake by plant roots. Assuming opened or closed conformations in response to the voltage difference across the membrane, the channel is activated by hyperpolarization. May be a major salt-sensitive potassium channel in roots. This Oryza sativa subsp. japonica (Rice) protein is Potassium channel AKT1 (AKT1).